A 202-amino-acid polypeptide reads, in one-letter code: Glycerol-3-phosphate acyltransferase (202 aa).

The next 6 helical transmembrane spans lie at 2–22, 54–74, 85–105, 120–140, 141–161, and 162–182; these read MIVV…GYVI, FIVT…PIWF, FFTH…YPIY, VVLG…FGVL, YIFK…VIGS, and LIIQ…ILIV.

Belongs to the PlsY family. In terms of assembly, probably interacts with PlsX.

Its subcellular location is the cell membrane. It catalyses the reaction an acyl phosphate + sn-glycerol 3-phosphate = a 1-acyl-sn-glycero-3-phosphate + phosphate. Its pathway is lipid metabolism; phospholipid metabolism. Functionally, catalyzes the transfer of an acyl group from acyl-phosphate (acyl-PO(4)) to glycerol-3-phosphate (G3P) to form lysophosphatidic acid (LPA). This enzyme utilizes acyl-phosphate as fatty acyl donor, but not acyl-CoA or acyl-ACP. The protein is Glycerol-3-phosphate acyltransferase of Staphylococcus haemolyticus (strain JCSC1435).